Consider the following 122-residue polypeptide: Large ribosomal subunit protein uL18 (122 aa).

Belongs to the universal ribosomal protein uL18 family. As to quaternary structure, part of the 50S ribosomal subunit; part of the 5S rRNA/L5/L18/L25 subcomplex. Contacts the 5S and 23S rRNAs.

Its function is as follows. This is one of the proteins that bind and probably mediate the attachment of the 5S RNA into the large ribosomal subunit, where it forms part of the central protuberance. In Ruminiclostridium cellulolyticum (strain ATCC 35319 / DSM 5812 / JCM 6584 / H10) (Clostridium cellulolyticum), this protein is Large ribosomal subunit protein uL18.